Consider the following 347-residue polypeptide: 4-hydroxy-2-oxovalerate aldolase (347 aa).

One can recognise a Pyruvate carboxyltransferase domain in the interval 2–252 (ILISDATLRD…DTRTTFERVM (251 aa)). 10-11 (RD) serves as a coordination point for substrate. Asp11 contributes to the Mn(2+) binding site. His14 (proton acceptor) is an active-site residue. Substrate-binding residues include Ser164 and His191. Mn(2+) is bound by residues His191 and His193.

It belongs to the 4-hydroxy-2-oxovalerate aldolase family.

The enzyme catalyses (S)-4-hydroxy-2-oxopentanoate = acetaldehyde + pyruvate. This chain is 4-hydroxy-2-oxovalerate aldolase (mhpE), found in Burkholderia pseudomallei (strain K96243).